The sequence spans 199 residues: dITP/XTP pyrophosphatase (199 aa).

7 to 12 (TGNKGK) is a binding site for substrate. The active-site Proton acceptor is the aspartate 71. Aspartate 71 lines the Mg(2+) pocket. Substrate is bound by residues alanine 72, 154–157 (FGYD), lysine 177, and 182–183 (HR).

It belongs to the HAM1 NTPase family. Homodimer. Requires Mg(2+) as cofactor.

It catalyses the reaction XTP + H2O = XMP + diphosphate + H(+). It carries out the reaction dITP + H2O = dIMP + diphosphate + H(+). The catalysed reaction is ITP + H2O = IMP + diphosphate + H(+). In terms of biological role, pyrophosphatase that catalyzes the hydrolysis of nucleoside triphosphates to their monophosphate derivatives, with a high preference for the non-canonical purine nucleotides XTP (xanthosine triphosphate), dITP (deoxyinosine triphosphate) and ITP. Seems to function as a house-cleaning enzyme that removes non-canonical purine nucleotides from the nucleotide pool, thus preventing their incorporation into DNA/RNA and avoiding chromosomal lesions. The chain is dITP/XTP pyrophosphatase from Bdellovibrio bacteriovorus (strain ATCC 15356 / DSM 50701 / NCIMB 9529 / HD100).